A 1423-amino-acid polypeptide reads, in one-letter code: Protein phosphatase Slingshot homolog 2 (1423 aa).

Disordered stretches follow at residues 1–37 (MALVTVQRSPTPSTTSSPCASEADSGEEECRSQPRSI) and 51–70 (LPRGNGSSTPRVSHRRNKHA). Residues 9–18 (SPTPSTTSSP) are compositionally biased toward low complexity. 3 positions are modified to phosphoserine: serine 17, serine 25, and serine 36. Residues 248–303 (ERTERLIKTKLREIMMQKDLENITSKEIRTELEMQMVCNLREFKEFIDNEMIVILG) enclose the DEK-C domain. A Tyrosine-protein phosphatase domain is found at 307–448 (SPTQIFEHVF…LEEYQGILLA (142 aa)). Cysteine 392 acts as the Phosphocysteine intermediate in catalysis. Phosphoserine occurs at positions 461, 487, 534, 631, and 633. 7 disordered regions span residues 698–725 (EMAADDQRSSSLSNTPHASEESSVDEDQ), 833–858 (HSSTADLEEEEPVEGEHDWGPGMHSG), 878–950 (RQEQ…HCER), 967–991 (APQDCLGSDSRSKKQEGDLKKQRAV), 1021–1042 (SLGHTEPGGEATPSKEGEKQGL), 1074–1105 (PQVLPLPHSSSECDRPADPNPMLSSPQDKGDC), and 1207–1226 (PEACRIPHSSSSENIRDLSH). Polar residues predominate over residues 884–904 (HGTASAGPTLSNRKNSKNDSS). Composition is skewed to basic and acidic residues over residues 910 to 932 (PKWKSDETTPEHSFFLKEAEPSK), 976 to 987 (SRSKKQEGDLKK), and 1033 to 1042 (PSKEGEKQGL). Serine 1217 carries the post-translational modification Phosphoserine. Phosphothreonine is present on threonine 1422.

This sequence belongs to the protein-tyrosine phosphatase family. In terms of assembly, interacts with filamentous actin. Expressed in brain, heart, liver, skeletal muscle, testis and thymus. Also expressed at lower levels in kidney, small intestine and spleen. Within testicular seminiferous tubules expressed in germ cells and spermatocytes, where it has a cytoplasmic localization, and round spermatids, where it concentrates in the acrosomal region next to the nucleus.

It is found in the cytoplasm. The protein resides in the cytoskeleton. Its subcellular location is the cell junction. The protein localises to the focal adhesion. It localises to the cytoplasmic vesicle. It is found in the secretory vesicle. The protein resides in the acrosome. The enzyme catalyses O-phospho-L-tyrosyl-[protein] + H2O = L-tyrosyl-[protein] + phosphate. The catalysed reaction is O-phospho-L-seryl-[protein] + H2O = L-seryl-[protein] + phosphate. It catalyses the reaction O-phospho-L-threonyl-[protein] + H2O = L-threonyl-[protein] + phosphate. Functionally, protein phosphatase which regulates actin filament dynamics. Dephosphorylates and activates the actin binding/depolymerizing factor cofilin, which subsequently binds to actin filaments and stimulates their disassembly. Inhibitory phosphorylation of cofilin is mediated by LIMK1, which may also be dephosphorylated and inactivated by this protein. Required for spermatogenesis. Involved in acrosome biogenesis, probably by regulating cofilin-mediated actin cytoskeleton remodeling during proacrosomal vesicle fusion and/or Golgi to perinuclear vesicle trafficking. This chain is Protein phosphatase Slingshot homolog 2 (Ssh2), found in Mus musculus (Mouse).